Here is a 226-residue protein sequence, read N- to C-terminus: Isoprenyl transferase (226 aa).

D12 is an active-site residue. D12 provides a ligand contact to Mg(2+). Residues G13–R16, W17, K25, H29, and S57–E59 contribute to the substrate site. N60 (proton acceptor) is an active-site residue. Residues W61, R63, R174, and R180 to S182 contribute to the substrate site. Mg(2+) is bound at residue E193.

The protein belongs to the UPP synthase family. As to quaternary structure, homodimer. Requires Mg(2+) as cofactor.

In terms of biological role, catalyzes the condensation of isopentenyl diphosphate (IPP) with allylic pyrophosphates generating different type of terpenoids. This chain is Isoprenyl transferase, found in Rickettsia sibirica (strain ATCC VR-151 / 246).